The chain runs to 311 residues: Ferrochelatase (311 aa).

Residues His-179 and Glu-260 each contribute to the Fe cation site.

It belongs to the ferrochelatase family.

It is found in the cytoplasm. It carries out the reaction heme b + 2 H(+) = protoporphyrin IX + Fe(2+). It participates in porphyrin-containing compound metabolism; protoheme biosynthesis; protoheme from protoporphyrin-IX: step 1/1. In terms of biological role, catalyzes the ferrous insertion into protoporphyrin IX. This chain is Ferrochelatase, found in Helicobacter hepaticus (strain ATCC 51449 / 3B1).